We begin with the raw amino-acid sequence, 239 residues long: Ribonuclease 3 (239 aa).

The RNase III domain occupies 12 to 137 (ISRLEALIGY…LIATLYLDGG (126 aa)). Mg(2+) is bound at residue E50. D54 is an active-site residue. Mg(2+) is bound by residues D123 and E126. Residue E126 is part of the active site. The DRBM domain occupies 162–231 (DAKTELQEWA…ATRLLEREGV (70 aa)).

It belongs to the ribonuclease III family. Homodimer. It depends on Mg(2+) as a cofactor.

It is found in the cytoplasm. The catalysed reaction is Endonucleolytic cleavage to 5'-phosphomonoester.. Its function is as follows. Digests double-stranded RNA. Involved in the processing of primary rRNA transcript to yield the immediate precursors to the large and small rRNAs (23S and 16S). Processes some mRNAs, and tRNAs when they are encoded in the rRNA operon. Processes pre-crRNA and tracrRNA of type II CRISPR loci if present in the organism. The polypeptide is Ribonuclease 3 (Agrobacterium fabrum (strain C58 / ATCC 33970) (Agrobacterium tumefaciens (strain C58))).